A 429-amino-acid polypeptide reads, in one-letter code: Stromal membrane-associated protein 2 (429 aa).

An Arf-GAP domain is found at 13 to 137 (QAVLANLLLE…LDINAFRKEK (125 aa)). The C4-type zinc finger occupies 28–51 (CADCQSKGPRWASWNIGVFICIRC). Ser-127 bears the Phosphoserine mark. A compositionally biased stretch (basic and acidic residues) spans 138 to 172 (DNKWKRGSEPAPEKKMEPVVFEKVKMPQKKEDPQL). Disordered regions lie at residues 138–181 (DNKW…PKSK) and 217–263 (VSSP…KKQL). An interaction with clathrin heavy chains region spans residues 163–232 (MPQKKEDPQL…SVSRKVVGSM (70 aa)). Over residues 217 to 231 (VSSPSSSVSRKVVGS) the composition is skewed to low complexity. Phosphoserine is present on residues Ser-219, Ser-223, Ser-225, Ser-231, and Ser-240. Residues 253–263 (SKSEETSKKQL) are compositionally biased toward basic and acidic residues. Positions 340–429 (MGGMQASMMG…NQTLSPQMWK (90 aa)) are interaction with PICALM.

Interacts with ARF1. Interacts with PICALM and clathrin heavy chains.

It is found in the cytoplasm. In terms of biological role, GTPase activating protein that acts on ARF1. Can also activate ARF6 (in vitro). May play a role in clathrin-dependent retrograde transport from early endosomes to the trans-Golgi network. This is Stromal membrane-associated protein 2 (SMAP2) from Bos taurus (Bovine).